A 141-amino-acid polypeptide reads, in one-letter code: Large ribosomal subunit protein uL11 (141 aa).

It belongs to the universal ribosomal protein uL11 family. Part of the ribosomal stalk of the 50S ribosomal subunit. Interacts with L10 and the large rRNA to form the base of the stalk. L10 forms an elongated spine to which L12 dimers bind in a sequential fashion forming a multimeric L10(L12)X complex. In terms of processing, one or more lysine residues are methylated.

Forms part of the ribosomal stalk which helps the ribosome interact with GTP-bound translation factors. This is Large ribosomal subunit protein uL11 from Lactiplantibacillus plantarum (strain ATCC BAA-793 / NCIMB 8826 / WCFS1) (Lactobacillus plantarum).